The sequence spans 1609 residues: Chitin synthase 5 (1609 aa).

Disordered stretches follow at residues 1 to 188, 248 to 280, and 294 to 320; these read MNPF…DRER, SGLG…GRDE, and VSLR…ESKT. Residues 1–326 are Cytoplasmic-facing; that stretch reads MNPFESLPDA…ESKTSRIAPG (326 aa). The span at 34 to 44 shows a compositional bias: polar residues; sequence PGSTGRPQNPI. Over residues 61 to 82 the composition is skewed to low complexity; that stretch reads PQQQQQQQQQQQQQQQRSQQPF. Residues 100-111 show a composition bias toward polar residues; that stretch reads AYLNSTSSQPTQ. Positions 134–146 are enriched in basic and acidic residues; sequence DSVKSYGDDKRSI. The span at 147–163 shows a compositional bias: polar residues; it reads NDPNSSSTALTQVNSLD. The segment covering 253–267 has biased composition (low complexity); sequence TGPTNVPPGGLGRAP. The segment covering 307-320 has biased composition (basic and acidic residues); sequence PSKEVPRDLGESKT. A helical transmembrane segment spans residues 327 to 347; it reads PVGGWMIYCYILTICCPGPFL. The Extracellular portion of the chain corresponds to 348–364; it reads RIFGIRTPEQQRAWREK. Residues 365–385 traverse the membrane as a helical segment; the sequence is MGLIGIITLIMAAVGFLTFGF. Topologically, residues 386 to 624 are cytoplasmic; sequence TQTVCGQQPD…ASKVELYLSL (239 aa). The chain crosses the membrane as a helical span at residues 625–645; the sequence is VFIIGVVAIKFFMAVMFGWFI. Residues 646 to 1176 are Extracellular-facing; the sequence is SWRLGNYANE…MRFVVFMELT (531 aa). N-linked (GlcNAc...) asparagine glycosylation occurs at Asn654. A disordered region spans residues 729-767; that stretch reads GVASPLGGSPPGSPSVAGGRSSASLAPAHSRRSSFSGSP. Positions 742–752 are enriched in low complexity; sequence PSVAGGRSSAS. Asn1015 and Asn1144 each carry an N-linked (GlcNAc...) asparagine glycan. A helical transmembrane segment spans residues 1177 to 1197; the sequence is GTLVLPAAIAFTLYVVVQAFL. The Cytoplasmic portion of the chain corresponds to 1198–1202; that stretch reads PNVPT. A helical transmembrane segment spans residues 1203 to 1223; that stretch reads PTIPLILLALILGLPGILIVV. Over 1224 to 1227 the chain is Extracellular; sequence TSRK. A helical membrane pass occupies residues 1228–1248; the sequence is IAYVGWMLIYLLSLPIWNFVL. Over 1249–1609 the chain is Cytoplasmic; sequence PLYAYWHMDD…PPGAAPPSFD (361 aa). Disordered regions lie at residues 1354 to 1381 and 1399 to 1609; these read PNAM…PSGA and TDAK…PSFD. Composition is skewed to polar residues over residues 1502–1514 and 1530–1552; these read NVST…TVSE and GSAS…QTRP. Over residues 1568–1588 the composition is skewed to low complexity; that stretch reads AQGVRQVQRGARRSQMPNSAA.

Belongs to the chitin synthase family. Class IV subfamily.

It localises to the cell membrane. The protein localises to the cytoplasmic vesicle membrane. It catalyses the reaction [(1-&gt;4)-N-acetyl-beta-D-glucosaminyl](n) + UDP-N-acetyl-alpha-D-glucosamine = [(1-&gt;4)-N-acetyl-beta-D-glucosaminyl](n+1) + UDP + H(+). Polymerizes chitin, a structural polymer of the cell wall and septum, by transferring the sugar moiety of UDP-GlcNAc to the non-reducing end of the growing chitin polymer. This Mycosarcoma maydis (Corn smut fungus) protein is Chitin synthase 5.